The chain runs to 359 residues: Heat-inducible transcription repressor HrcA (359 aa).

It belongs to the HrcA family.

Functionally, negative regulator of class I heat shock genes (grpE-dnaK-dnaJ and groELS operons). Prevents heat-shock induction of these operons. This Sinorhizobium fredii (strain NBRC 101917 / NGR234) protein is Heat-inducible transcription repressor HrcA.